A 300-amino-acid chain; its full sequence is D-alanine--D-alanine ligase (300 aa).

Residues 99–293 (KKILKYANIN…FAELLNSIVK (195 aa)) enclose the ATP-grasp domain. 126-181 (IEKIGYPVFVKPNSGGSSVATNLVKDGDGIKEAVELALKYDKEVMIENYTKGEEIT) serves as a coordination point for ATP. Residues Asp248, Glu260, and Asn262 each coordinate Mg(2+).

Belongs to the D-alanine--D-alanine ligase family. Requires Mg(2+) as cofactor. The cofactor is Mn(2+).

It is found in the cytoplasm. It catalyses the reaction 2 D-alanine + ATP = D-alanyl-D-alanine + ADP + phosphate + H(+). It participates in cell wall biogenesis; peptidoglycan biosynthesis. In terms of biological role, cell wall formation. The chain is D-alanine--D-alanine ligase from Clostridium botulinum (strain 657 / Type Ba4).